The chain runs to 1357 residues: DNA-directed RNA polymerase subunit beta (1357 aa).

This sequence belongs to the RNA polymerase beta chain family. The RNAP catalytic core consists of 2 alpha, 1 beta, 1 beta' and 1 omega subunit. When a sigma factor is associated with the core the holoenzyme is formed, which can initiate transcription.

It carries out the reaction RNA(n) + a ribonucleoside 5'-triphosphate = RNA(n+1) + diphosphate. In terms of biological role, DNA-dependent RNA polymerase catalyzes the transcription of DNA into RNA using the four ribonucleoside triphosphates as substrates. This Pseudomonas aeruginosa (strain LESB58) protein is DNA-directed RNA polymerase subunit beta.